The following is a 229-amino-acid chain: Dephospho-CoA kinase domain-containing protein (229 aa).

Residues Leu-3 to Ala-207 enclose the DPCK domain. Gly-8–Ser-15 contacts ATP.

The protein belongs to the CoaE family.

This chain is Dephospho-CoA kinase domain-containing protein (dcakd), found in Danio rerio (Zebrafish).